Here is a 213-residue protein sequence, read N- to C-terminus: Non-structural protein NP-1 (213 aa).

The interval 1–80 (MERSRSPRET…ATRKETATKK (80 aa)) is disordered. Composition is skewed to basic and acidic residues over residues 15-33 (SRDKSDADWSERRREERTR) and 43-58 (AHGERSWGSWRSREKN).

This sequence belongs to the Bocaparvovirus Non-structural protein NP-1 family.

The protein resides in the host nucleus. Functionally, required for the expression of the capsid proteins. Performs the splicing and internal polyadenylation of the viral capsid-encoding mRNA precursor, which allows its maturation and expression. Transactivates the viral promoter. This chain is Non-structural protein NP-1 (NP1), found in Bos taurus (Bovine).